Consider the following 324-residue polypeptide: HPr kinase/phosphorylase (324 aa).

Active-site residues include histidine 146 and lysine 167. ATP is bound at residue 161–168 (GDSGLGKS). Residue serine 168 coordinates Mg(2+). Aspartate 185 serves as the catalytic Proton acceptor; for phosphorylation activity. Proton donor; for dephosphorylation activity. The segment at 209-218 (LEVRGLGLLD) is important for the catalytic mechanism of both phosphorylation and dephosphorylation. Position 210 (glutamate 210) interacts with Mg(2+). Arginine 250 is an active-site residue. Residues 271–276 (QVAAGR) are important for the catalytic mechanism of dephosphorylation.

This sequence belongs to the HPrK/P family. In terms of assembly, homohexamer. The cofactor is Mg(2+).

It carries out the reaction [HPr protein]-L-serine + ATP = [HPr protein]-O-phospho-L-serine + ADP + H(+). The catalysed reaction is [HPr protein]-O-phospho-L-serine + phosphate + H(+) = [HPr protein]-L-serine + diphosphate. Its function is as follows. Catalyzes the ATP- as well as the pyrophosphate-dependent phosphorylation of a specific serine residue in HPr, a phosphocarrier protein of the phosphoenolpyruvate-dependent sugar phosphotransferase system (PTS). HprK/P also catalyzes the pyrophosphate-producing, inorganic phosphate-dependent dephosphorylation (phosphorolysis) of seryl-phosphorylated HPr (P-Ser-HPr). In Ralstonia pickettii (strain 12J), this protein is HPr kinase/phosphorylase.